An 84-amino-acid chain; its full sequence is Exendin-2-long (84 aa).

Positions 1-23 (MKSILWLCVFGLLIATLFPVSWQ) are cleaved as a signal peptide. The propeptide occupies 24–44 (MAIKSRLSSEDSETDQRLFES).

The protein belongs to the glucagon family. Post-translationally, an amidated Pro-81 is described. Such an amidation is however not compatible with the sequence displayed. Indeed cDNAs do not encode a Gly that could serve as substrate for peptide alpha-amidation. Expressed by the venom gland. Not expressed in the pancreas, liver, stomach, small intestine, lung, heart, kidney, spleen, ovary, and brain.

The protein localises to the secreted. Has vasoactive intestinal peptide(VIP)/secretin-like biological activity. Interacts with rat and human VIP receptors 1 (VIPR1) and 2 (VIPR2), with the highest affinity for the human VIPR2. Induces hypotension that is mediated by relaxation of cardiac smooth muscle. This vasodilation may not be transduced by VIP or PACAP receptors. This is Exendin-2-long from Heloderma suspectum (Gila monster).